Reading from the N-terminus, the 178-residue chain is ATP-dependent protease subunit HslV (178 aa).

Threonine 8 is an active-site residue. Residues glycine 163, cysteine 166, and threonine 169 each coordinate Na(+).

Belongs to the peptidase T1B family. HslV subfamily. A double ring-shaped homohexamer of HslV is capped on each side by a ring-shaped HslU homohexamer. The assembly of the HslU/HslV complex is dependent on binding of ATP.

The protein localises to the cytoplasm. The catalysed reaction is ATP-dependent cleavage of peptide bonds with broad specificity.. Allosterically activated by HslU binding. Functionally, protease subunit of a proteasome-like degradation complex believed to be a general protein degrading machinery. The protein is ATP-dependent protease subunit HslV of Treponema denticola (strain ATCC 35405 / DSM 14222 / CIP 103919 / JCM 8153 / KCTC 15104).